Reading from the N-terminus, the 660-residue chain is DNA mismatch repair protein MutL (660 aa).

Residues 341–355 (SFQSDGAPPTQQLSS) are compositionally biased toward polar residues. Disordered stretches follow at residues 341-362 (SFQSDGAPPTQQLSSDVREKAE) and 378-398 (ALSPTKQELPKSPERSERVER). Positions 385–398 (ELPKSPERSERVER) are enriched in basic and acidic residues.

It belongs to the DNA mismatch repair MutL/HexB family.

In terms of biological role, this protein is involved in the repair of mismatches in DNA. It is required for dam-dependent methyl-directed DNA mismatch repair. May act as a 'molecular matchmaker', a protein that promotes the formation of a stable complex between two or more DNA-binding proteins in an ATP-dependent manner without itself being part of a final effector complex. The chain is DNA mismatch repair protein MutL from Heliobacterium modesticaldum (strain ATCC 51547 / Ice1).